A 92-amino-acid chain; its full sequence is Small ribosomal subunit protein uS19 (92 aa).

The protein belongs to the universal ribosomal protein uS19 family.

Protein S19 forms a complex with S13 that binds strongly to the 16S ribosomal RNA. The sequence is that of Small ribosomal subunit protein uS19 from Nostoc sp. (strain PCC 7120 / SAG 25.82 / UTEX 2576).